A 1241-amino-acid polypeptide reads, in one-letter code: Plasma membrane calcium-transporting ATPase 4 (1241 aa).

Over 1-92 (MTNPSDRVLP…NVIPPKKPKT (92 aa)) the chain is Cytoplasmic. Serine 13 bears the Phosphoserine mark. A helical transmembrane segment spans residues 93–113 (FLELVWEALQDVTLIILEIAA). The Extracellular portion of the chain corresponds to 114–150 (IISLVLSFYRPAGEENELCGQVATTPEDENEAQAGWI). The chain crosses the membrane as a helical span at residues 151 to 171 (EGAAILFSVIIVVLVTAFNDW). Residues 172–356 (SKEKQFRGLQ…KEKSVLQGKL (185 aa)) lie on the Cytoplasmic side of the membrane. Residues 294–318 (EGEKKKKGKKQGVPENRNKAKTQDG) are disordered. Residue serine 328 is modified to Phosphoserine. A helical transmembrane segment spans residues 357-376 (TRLAVQIGKAGLLMSALTVF). The Extracellular segment spans residues 377-409 (ILILYFVIDNFVINRRPWLPECTPIYIQYFVKF). Residues 410 to 427 (FIIGITVLVVAVPEGLPL) form a helical membrane-spanning segment. Topologically, residues 428 to 840 (AVTISLAYSV…MWGRNVYDSI (413 aa)) are cytoplasmic. Residue aspartate 465 is the 4-aspartylphosphate intermediate of the active site. Residues aspartate 785 and aspartate 789 each coordinate Mg(2+). A helical transmembrane segment spans residues 841-860 (SKFLQFQLTVNVVAVIVAFT). Topologically, residues 861 to 870 (GACITQDSPL) are extracellular. A helical membrane pass occupies residues 871–891 (KAVQMLWVNLIMDTFASLALA). The Cytoplasmic portion of the chain corresponds to 892 to 911 (TEPPTESLLKRRPYGRNKPL). The chain crosses the membrane as a helical span at residues 912–934 (ISRTMMKNILGHAFYQLIVIFIL). At 935 to 952 (VFAGEKFFDIDSGRKAPL) the chain is on the extracellular side. A helical transmembrane segment spans residues 953 to 974 (HSPPSQHYTIVFNTFVLMQLFN). At 975-993 (EINSRKIHGEKNVFSGIYR) the chain is on the cytoplasmic side. A helical membrane pass occupies residues 994–1015 (NIIFCSVVLGTFICQIFIVEFG). Residues 1016–1025 (GKPFSCTSLS) lie on the Extracellular side of the membrane. The chain crosses the membrane as a helical span at residues 1026–1047 (LSQWLWCLFIGIGELLWGQFIS). Residues 1048–1241 (AIPTRSLKFL…SSLQSLETSV (194 aa)) are Cytoplasmic-facing. The interval 1086 to 1103 (LRRGQILWFRGLNRIQTQ) is calmodulin-binding subdomain A. The residue at position 1102 (threonine 1102) is a Phosphothreonine; by PKC. Positions 1104–1113 (IDVINTFQTG) are calmodulin-binding subdomain B.

The protein belongs to the cation transport ATPase (P-type) (TC 3.A.3) family. Type IIB subfamily. As to quaternary structure, interacts with PDZD11. Interacts with SLC35G1 and STIM1. Interacts with calmodulin. In terms of tissue distribution, isoform XB is the most abundant isoform and is expressed ubiquitously. Isoforms containing segment Z have only been detected in heart, while isoforms containing segment a have been found in heart, stomach and brain cortex.

The protein resides in the cell membrane. Its subcellular location is the cell projection. It is found in the cilium. The protein localises to the flagellum membrane. The catalysed reaction is Ca(2+)(in) + ATP + H2O = Ca(2+)(out) + ADP + phosphate + H(+). Activated by calcium/calmodulin. In terms of biological role, calcium/calmodulin-regulated and magnesium-dependent enzyme that catalyzes the hydrolysis of ATP coupled with the transport of calcium out of the cell. By regulating sperm cell calcium homeostasis, may play a role in sperm motility. In Homo sapiens (Human), this protein is Plasma membrane calcium-transporting ATPase 4.